Reading from the N-terminus, the 185-residue chain is Meiotic expression up-regulated protein 31 (185 aa).

This Schizosaccharomyces pombe (strain 972 / ATCC 24843) (Fission yeast) protein is Meiotic expression up-regulated protein 31 (meu31).